Consider the following 479-residue polypeptide: Ubiquinone biosynthesis monooxygenase COQ6, mitochondrial (479 aa).

The protein belongs to the UbiH/COQ6 family. In terms of assembly, component of a multi-subunit COQ enzyme complex, composed of at least COQ3, COQ4, COQ5, COQ6, COQ7 and COQ9. Requires FAD as cofactor.

Its subcellular location is the mitochondrion inner membrane. The enzyme catalyses 4-hydroxy-3-(all-trans-decaprenyl)benzoate + 2 reduced [2Fe-2S]-[ferredoxin] + O2 + 2 H(+) = 3,4-dihydroxy-5-(all-trans-decaprenyl)benzoate + 2 oxidized [2Fe-2S]-[ferredoxin] + H2O. It catalyses the reaction 2-methoxy-6-(all-trans-decaprenyl)phenol + 2 reduced [2Fe-2S]-[ferredoxin] + O2 + 2 H(+) = 2-methoxy-6-(all-trans-decaprenyl)benzene-1,4-diol + 2 oxidized [2Fe-2S]-[ferredoxin] + H2O. It participates in cofactor biosynthesis; ubiquinone biosynthesis. In terms of biological role, FAD-dependent monooxygenase required for two non-consecutive steps during ubiquinone biosynthesis. Required for the C5-ring hydroxylation during ubiquinone biosynthesis by catalyzing the hydroxylation of 4-hydroxy-3-(all-trans-decaprenyl)benzoic acid to 3,4-dihydroxy-5-(all-trans-decaprenyl)benzoic acid. Also acts downstream of COQ4, for the C1-hydroxylation during ubiquinone biosynthesis by catalyzing the hydroxylation of 2-methoxy-6-(all-trans-decaprenyl)phenol to 2-methoxy-6-(all-trans-decaprenyl)benzene-1,4-diol. The electrons required for the hydroxylation reaction are funneled indirectly to coq6 from NADPH via a ferredoxin/ferredoxin reductase system. The polypeptide is Ubiquinone biosynthesis monooxygenase COQ6, mitochondrial (Schizosaccharomyces pombe (strain 972 / ATCC 24843) (Fission yeast)).